A 37-amino-acid polypeptide reads, in one-letter code: Esculentin-2SE (37 aa).

A disulfide bridge connects residues cysteine 31 and cysteine 37.

In terms of tissue distribution, expressed by the skin glands.

Its subcellular location is the secreted. Its function is as follows. Mast cell degranulating peptide. Causes histamine release from rat peritoneal mast cells in vitro. Has antibacterial activity against the Gram-negative bacterium E.coli K12 and Gram-positive bacterium M.luteus NCT C2665. The protein is Esculentin-2SE of Lithobates sevosus (Dusky gopher frog).